Consider the following 139-residue polypeptide: Ribonuclease VapC36 (139 aa).

The 127-residue stretch at 1–127 (MIVDTSAVVA…GNDFPQTDLE (127 aa)) folds into the PINc domain. Mg(2+) is bound by residues D4 and D100.

It belongs to the PINc/VapC protein family. Requires Mg(2+) as cofactor.

Toxic component of a type II toxin-antitoxin (TA) system. An RNase. Its cognate antitoxin is VapB36. The sequence is that of Ribonuclease VapC36 from Mycobacterium tuberculosis (strain ATCC 25618 / H37Rv).